The sequence spans 127 residues: uncharacterized protein (127 aa).

2 consecutive transmembrane segments (helical) span residues 64-84 (GYYITNLICIVVGLFLYFGYL) and 101-118 (FFHFFFTILAVTSRAIYY).

The protein resides in the membrane. This is an uncharacterized protein from Saccharomyces cerevisiae (strain ATCC 204508 / S288c) (Baker's yeast).